A 389-amino-acid chain; its full sequence is Growth/differentiation factor 2 (389 aa).

Residues 1 to 20 (MWRVGHLLLLMSIVFRITEE) form the signal peptide. A propeptide spanning residues 21 to 280 (KSLGDAGSLE…PVSNRHRRRK (260 aa)) is cleaved from the precursor. Asn-65, Asn-118, Asn-127, and Asn-232 each carry an N-linked (GlcNAc...) asparagine glycan. Over residues 263–272 (QQQVGNQAPV) the composition is skewed to polar residues. Residues 263-284 (QQQVGNQAPVSNRHRRRKRKAK) form a disordered region. A compositionally biased stretch (basic residues) spans 274–284 (NRHRRRKRKAK). 3 disulfide bridges follow: Cys-288/Cys-354, Cys-317/Cys-386, and Cys-321/Cys-388. Residue Asn-342 is glycosylated (N-linked (GlcNAc...) asparagine).

It belongs to the TGF-beta family. In terms of assembly, homodimer; disulfide-linked. In terms of processing, a reversible disulfide bond can be formed between the two subunits in the homodimer; this has no effect on gdf2 activity.

It localises to the secreted. Potent circulating inhibitor of angiogenesis. Signals through the type I activin receptor ACVRL1 but not other Alks. Signaling through SMAD1 in endothelial cells requires TGF-beta coreceptor endoglin/eng. This is Growth/differentiation factor 2 (gdf2) from Danio rerio (Zebrafish).